We begin with the raw amino-acid sequence, 102 residues long: Integration host factor subunit beta (102 aa).

It belongs to the bacterial histone-like protein family. Heterodimer of an alpha and a beta chain.

Functionally, this protein is one of the two subunits of integration host factor, a specific DNA-binding protein that functions in genetic recombination as well as in transcriptional and translational control. The sequence is that of Integration host factor subunit beta from Rhizobium rhizogenes (strain K84 / ATCC BAA-868) (Agrobacterium radiobacter).